The following is a 364-amino-acid chain: Fructose-bisphosphate aldolase B (364 aa).

The residue at position 2 (A2) is an N-acetylalanine. N6-succinyllysine is present on K13. Phosphoserine is present on S36. Position 39 is a phosphothreonine (T39). R43 is a binding site for beta-D-fructose 1,6-bisphosphate. S89 bears the Phosphoserine mark. The residue at position 119 (T119) is a Phosphothreonine. N6-succinyllysine is present on K121. At S132 the chain carries Phosphoserine. E188 functions as the Proton acceptor in the catalytic mechanism. K230 functions as the Schiff-base intermediate with dihydroxyacetone-P in the catalytic mechanism. Phosphoserine occurs at positions 272, 276, 299, and 301. S272–G274 is a beta-D-fructose 1,6-bisphosphate binding site. Residue R304 participates in beta-D-fructose 1,6-bisphosphate binding. At S309 the chain carries Phosphoserine. The residue at position 317 (K317) is an N6-succinyllysine.

This sequence belongs to the class I fructose-bisphosphate aldolase family. In terms of assembly, homotetramer. Interacts with BBS1, BBS2, BBS4 and BBS7. Forms a ternary complex with G6PD and TP53; this interaction is direct.

It localises to the cytoplasm. Its subcellular location is the cytosol. The protein localises to the cytoskeleton. The protein resides in the microtubule organizing center. It is found in the centrosome. It localises to the centriolar satellite. The enzyme catalyses beta-D-fructose 1,6-bisphosphate = D-glyceraldehyde 3-phosphate + dihydroxyacetone phosphate. It catalyses the reaction beta-D-fructose 1-phosphate = D-glyceraldehyde + dihydroxyacetone phosphate. Its pathway is carbohydrate degradation; glycolysis; D-glyceraldehyde 3-phosphate and glycerone phosphate from D-glucose: step 4/4. The protein operates within carbohydrate biosynthesis; gluconeogenesis. It functions in the pathway carbohydrate metabolism; fructose metabolism. Catalyzes the aldol cleavage of fructose 1,6-biphosphate to form two triosephosphates dihydroxyacetone phosphate and D-glyceraldehyde 3-phosphate in glycolysis as well as the reverse stereospecific aldol addition reaction in gluconeogenesis. In fructolysis, metabolizes fructose 1-phosphate derived from the phosphorylation of dietary fructose by fructokinase into dihydroxyacetone phosphate and D-glyceraldehyde. Acts as an adapter independently of its enzymatic activity, exerts a tumor suppressor role by stabilizing the ternary complex with G6PD and TP53 to inhibit G6PD activity and keep oxidative pentose phosphate metabolism in check. The protein is Fructose-bisphosphate aldolase B (ALDOB) of Pongo abelii (Sumatran orangutan).